Reading from the N-terminus, the 98-residue chain is Cystatin-B (98 aa).

One can recognise a Cystatin domain in the interval 4–83; sequence GGTSQPVDAD…PCNGETLELS (80 aa). Positions 46–50 match the Secondary area of contact motif; sequence QCVPG.

The protein belongs to the cystatin family. As to expression, ubiquitously expressed in normal and lipopolysaccharide (LPS)-stimulated tissues including brain, eye, gullet, heart, liver, muscle, stomach, kidney, spleen, pyloric ceca, intestine and gill.

Its subcellular location is the cytoplasm. Its activity is regulated as follows. Greatly decreased inhibitory activity against papain protease by metal ions including ZnSO(4), CuSO(4), HgCl(2) and CoCl(2). Decreased inhibitory activity against papain protease by detergents including Tween 20, SDS and Brij 35. In terms of biological role, thiol protease inhibitor. Has high papain, bovine cathepsin B and fish cathepsins F and X inhibitory activity and inhibits fish cathepsins L, S and K to a lesser extent in vitro. May be involved in innate immunity. This is Cystatin-B from Paralichthys olivaceus (Bastard halibut).